Reading from the N-terminus, the 379-residue chain is GDP-mannose transporter 1 (379 aa).

The Cytoplasmic portion of the chain corresponds to 1–39 (MTDNRKPEDYTIEMDKLGQNKNYQAPPPPPQPRSSTASS). The tract at residues 17–38 (LGQNKNYQAPPPPPQPRSSTAS) is disordered. Residues 40 to 60 (ISNNAALSVLAYCGSSILMTV) form a helical membrane-spanning segment. Residues 61-69 (MNKYVLSSD) lie on the Lumenal side of the membrane. Residues 70–90 (FNLNFFLLCVQSLVCIIAIQL) form a helical membrane-spanning segment. Topologically, residues 91 to 110 (CKACGLITYRDFNLDEARKW) are cytoplasmic. Residues 111–133 (FPITLLLIGMIYTGSKALQFLSI) form a helical membrane-spanning segment. Topologically, residues 134-136 (PVY) are lumenal. Residues 137–156 (TIFKNLTIILIAYGEVLWFG) form a helical membrane-spanning segment. The Cytoplasmic portion of the chain corresponds to 157-162 (GSVTNL). The helical transmembrane segment at 163-182 (TLFSFGLMVFSSIIAAWADI) threads the bilayer. The Lumenal segment spans residues 183–198 (KHAIESSGDATSKVST). A helical membrane pass occupies residues 199 to 219 (LNAGYIWMLINCLCTSSYVLG). Residues 220 to 233 (MRKRIKLTNFKDFD) are Cytoplasmic-facing. Residues 234–254 (TMFYNNLLSIPVLIVCSGILE) traverse the membrane as a helical segment. The Lumenal portion of the chain corresponds to 255–272 (DWSPANVARNFPSADRNG). A helical membrane pass occupies residues 273 to 293 (IMFAMILSGLSTVFISYTSAW). At 294–301 (CVRVTSST) the chain is on the cytoplasmic side. Residues 302–322 (TYSMVGALNKLPIALSGLIFF) traverse the membrane as a helical segment. Topologically, residues 323 to 325 (DAP) are lumenal. A helical membrane pass occupies residues 326–346 (VTFPSVSAIMVGFVSGIVYAV). Residues 347-379 (AKIKQNAKPKVGILPTTNPVSASSQSMRDSLRS) lie on the Cytoplasmic side of the membrane.

This sequence belongs to the TPT transporter family. SLC35D subfamily. Homooligomer.

It is found in the golgi apparatus membrane. Its subcellular location is the cytoplasmic vesicle membrane. The protein resides in the endoplasmic reticulum membrane. In terms of biological role, involved in the import of GDP-mannose from the cytoplasm into the Golgi lumen. The chain is GDP-mannose transporter 1 (gmt1) from Emericella nidulans (strain FGSC A4 / ATCC 38163 / CBS 112.46 / NRRL 194 / M139) (Aspergillus nidulans).